The sequence spans 214 residues: Pyridoxine/pyridoxamine 5'-phosphate oxidase (214 aa).

Substrate is bound by residues 7-10 (REEY) and Lys-65. FMN is bound by residues 60-65 (RTVLLK), 75-76 (FT), Arg-81, Lys-82, and Gln-104. Residues Tyr-122, Arg-126, and Ser-130 each contribute to the substrate site. FMN-binding positions include 139 to 140 (QS) and Trp-184. Residue 190-192 (RLH) participates in substrate binding. FMN is bound at residue Arg-194.

This sequence belongs to the pyridoxamine 5'-phosphate oxidase family. Homodimer. It depends on FMN as a cofactor.

It catalyses the reaction pyridoxamine 5'-phosphate + O2 + H2O = pyridoxal 5'-phosphate + H2O2 + NH4(+). It carries out the reaction pyridoxine 5'-phosphate + O2 = pyridoxal 5'-phosphate + H2O2. It functions in the pathway cofactor metabolism; pyridoxal 5'-phosphate salvage; pyridoxal 5'-phosphate from pyridoxamine 5'-phosphate: step 1/1. It participates in cofactor metabolism; pyridoxal 5'-phosphate salvage; pyridoxal 5'-phosphate from pyridoxine 5'-phosphate: step 1/1. Its function is as follows. Catalyzes the oxidation of either pyridoxine 5'-phosphate (PNP) or pyridoxamine 5'-phosphate (PMP) into pyridoxal 5'-phosphate (PLP). The polypeptide is Pyridoxine/pyridoxamine 5'-phosphate oxidase (Crocosphaera subtropica (strain ATCC 51142 / BH68) (Cyanothece sp. (strain ATCC 51142))).